The primary structure comprises 214 residues: Probable nicotinate-nucleotide adenylyltransferase (214 aa).

Belongs to the NadD family.

The catalysed reaction is nicotinate beta-D-ribonucleotide + ATP + H(+) = deamido-NAD(+) + diphosphate. It participates in cofactor biosynthesis; NAD(+) biosynthesis; deamido-NAD(+) from nicotinate D-ribonucleotide: step 1/1. Its function is as follows. Catalyzes the reversible adenylation of nicotinate mononucleotide (NaMN) to nicotinic acid adenine dinucleotide (NaAD). The polypeptide is Probable nicotinate-nucleotide adenylyltransferase (Mycobacterium bovis (strain ATCC BAA-935 / AF2122/97)).